The following is a 188-amino-acid chain: Guanylate kinase (188 aa).

Positions 4 to 183 (RNIVVLTAPS…AVEETLTRIR (180 aa)) constitute a Guanylate kinase-like domain. Residue 11–18 (APSGAGKT) participates in ATP binding.

The protein belongs to the guanylate kinase family.

It localises to the cytoplasm. It carries out the reaction GMP + ATP = GDP + ADP. In terms of biological role, essential for recycling GMP and indirectly, cGMP. This is Guanylate kinase from Salinibacter ruber (strain DSM 13855 / M31).